Consider the following 617-residue polypeptide: V-type proton ATPase catalytic subunit A (617 aa).

Residue 257-264 participates in ATP binding; sequence GAFGCGKT.

This sequence belongs to the ATPase alpha/beta chains family. V-ATPase is a heteromultimeric enzyme composed of a peripheral catalytic V1 complex (components A to H) attached to an integral membrane V0 proton pore complex (components: a, c, c', c'', d, e, f and VOA1).

The protein resides in the vacuole membrane. It catalyses the reaction ATP + H2O + 4 H(+)(in) = ADP + phosphate + 5 H(+)(out). In terms of biological role, catalytic subunit of the V1 complex of vacuolar(H+)-ATPase (V-ATPase), a multisubunit enzyme composed of a peripheral complex (V1) that hydrolyzes ATP and a membrane integral complex (V0) that translocates protons. V-ATPase is responsible for acidifying and maintaining the pH of intracellular compartments. This Eremothecium gossypii (strain ATCC 10895 / CBS 109.51 / FGSC 9923 / NRRL Y-1056) (Yeast) protein is V-type proton ATPase catalytic subunit A (VMA1).